The chain runs to 510 residues: Polyamine aminopropyltransferase 2 (510 aa).

Transmembrane regions (helical) follow at residues 6-26 (ALLV…ELIA), 38-58 (ILQF…GSWV), 74-94 (LELL…LLFA), 102-122 (LVLY…IPLV), 140-160 (VLTF…LVLA), and 165-185 (LVRT…WTLW). In terms of domain architecture, PABS spans 205-449 (AGMVGAALLA…GEWGFILAAP (245 aa)). A spermidine synthase region spans residues 207–456 (MVGAALLAGF…AAPGRADFRP (250 aa)). Glutamine 244 contacts S-methyl-5'-thioadenosine. Positions 274 and 298 each coordinate spermidine. Residues aspartate 318 and 352 to 353 (DA) each bind S-methyl-5'-thioadenosine. Aspartate 370 functions as the Proton acceptor in the catalytic mechanism.

It belongs to the spermidine/spermine synthase family. In terms of assembly, homodimer or homotetramer.

It is found in the cell membrane. It carries out the reaction S-adenosyl 3-(methylsulfanyl)propylamine + putrescine = S-methyl-5'-thioadenosine + spermidine + H(+). It functions in the pathway amine and polyamine biosynthesis; spermidine biosynthesis; spermidine from putrescine: step 1/1. Functionally, catalyzes the irreversible transfer of a propylamine group from the amino donor S-adenosylmethioninamine (decarboxy-AdoMet) to putrescine (1,4-diaminobutane) to yield spermidine. The sequence is that of Polyamine aminopropyltransferase 2 from Ralstonia nicotianae (strain ATCC BAA-1114 / GMI1000) (Ralstonia solanacearum).